Reading from the N-terminus, the 218-residue chain is Cytidylate kinase (218 aa).

11 to 19 serves as a coordination point for ATP; the sequence is GPSGVGKST.

The protein belongs to the cytidylate kinase family. Type 1 subfamily.

The protein resides in the cytoplasm. It catalyses the reaction CMP + ATP = CDP + ADP. It carries out the reaction dCMP + ATP = dCDP + ADP. The chain is Cytidylate kinase from Mycoplasmopsis synoviae (strain 53) (Mycoplasma synoviae).